Reading from the N-terminus, the 227-residue chain is dTTP/UTP pyrophosphatase (227 aa).

Residues 1-21 (MNDLPRAELPGSGSPNPESLI) form a disordered region. Asp87 functions as the Proton acceptor in the catalytic mechanism.

Belongs to the Maf family. YhdE subfamily. Requires a divalent metal cation as cofactor.

The protein resides in the cytoplasm. It catalyses the reaction dTTP + H2O = dTMP + diphosphate + H(+). The enzyme catalyses UTP + H2O = UMP + diphosphate + H(+). In terms of biological role, nucleoside triphosphate pyrophosphatase that hydrolyzes dTTP and UTP. May have a dual role in cell division arrest and in preventing the incorporation of modified nucleotides into cellular nucleic acids. This is dTTP/UTP pyrophosphatase from Rhodopirellula baltica (strain DSM 10527 / NCIMB 13988 / SH1).